The sequence spans 936 residues: DNA topoisomerase 1 (936 aa).

A Toprim domain is found at R15–T139. Positions 21 and 108 each coordinate Mg(2+). The Topo IA-type catalytic domain occupies D154 to E611. The tract at residues S188 to Q193 is interaction with DNA. Y339 functions as the O-(5'-phospho-DNA)-tyrosine intermediate in the catalytic mechanism. Disordered regions lie at residues L661–D688, V732–R767, K841–A884, and L903–A936. The segment covering R910–A936 has biased composition (basic residues).

The protein belongs to the type IA topoisomerase family. Monomer. Mg(2+) is required as a cofactor.

It catalyses the reaction ATP-independent breakage of single-stranded DNA, followed by passage and rejoining.. Functionally, releases the supercoiling and torsional tension of DNA, which is introduced during the DNA replication and transcription, by transiently cleaving and rejoining one strand of the DNA duplex. Introduces a single-strand break via transesterification at a target site in duplex DNA. The scissile phosphodiester is attacked by the catalytic tyrosine of the enzyme, resulting in the formation of a DNA-(5'-phosphotyrosyl)-enzyme intermediate and the expulsion of a 3'-OH DNA strand. The free DNA strand then undergoes passage around the unbroken strand, thus removing DNA supercoils. Finally, in the religation step, the DNA 3'-OH attacks the covalent intermediate to expel the active-site tyrosine and restore the DNA phosphodiester backbone. In terms of biological role, relaxes negatively (but not positively) supercoiled DNA, concatanates and knots circular ssDNA at 52 but not 37 degrees Celsius. Preferentially nicks supercoiled DNA at C(G/T)CTT, cutting between the TT residues, binds ss and dsDNA with the recognition site. The sequence is that of DNA topoisomerase 1 from Mycolicibacterium smegmatis (strain ATCC 700084 / mc(2)155) (Mycobacterium smegmatis).